We begin with the raw amino-acid sequence, 58 residues long: Succinate dehydrogenase subunit 8A, mitochondrial (58 aa).

As to quaternary structure, component of complex II composed of eight subunits in plants: four classical SDH subunits SDH1, SDH2, SDH3 and SDH4 (a flavoprotein (FP), an iron-sulfur protein (IP), and a cytochrome b composed of a large and a small subunit.), as well as four subunits unknown in mitochondria from bacteria and heterotrophic eukaryotes.

The protein resides in the mitochondrion inner membrane. Its pathway is carbohydrate metabolism; tricarboxylic acid cycle. This chain is Succinate dehydrogenase subunit 8A, mitochondrial, found in Oryza sativa subsp. japonica (Rice).